The chain runs to 93 residues: Bublin coiled-coil protein (93 aa).

2 disordered regions span residues 1 to 26 (MAGP…GDTF) and 74 to 93 (QQQS…QPPA). Positions 17 to 26 (DEGDEGGDTF) are enriched in acidic residues. Positions 59–80 (LKELLESNRQTRLEFQQQSKQL) form a coiled coil.

It belongs to the UPF0184 (EST00098) family.

The protein resides in the cell junction. It localises to the cytoplasm. The protein localises to the cytoskeleton. Essential for intermediate filament organization in intestinal cells, interacts with intermediate filament and regulates intestinal lumen morphology. The protein is Bublin coiled-coil protein (BBLN) of Taeniopygia guttata (Zebra finch).